A 141-amino-acid polypeptide reads, in one-letter code: Light-regulated protein 1, chloroplastic (141 aa).

Residues M1–R41 constitute a chloroplast transit peptide. The span at S35–L51 shows a compositional bias: low complexity. Residues S35–V58 are disordered. Residues V58 to C132 form a 2 X 15 AA approximate repeats region. 2 repeat units span residues V67–C81 and V118–C132.

In terms of assembly, component of high molecular weight thylakoid LFNRs-containing protein complexes containing LIR1, LFNR1, LFNR2, TIC62 and TROL proteins. Interacts directly with LFNR1 and LFNR2; LIR1 increases the affinity of LFNR1 and LFNR2 for TIC62 and subsequent thylakoid relocalization. Post-translationally, may form interchain disulfide bonds with LFNR1 and LFNR2.

It is found in the plastid. Its subcellular location is the chloroplast thylakoid membrane. The protein resides in the chloroplast envelope. It localises to the chloroplast stroma. In terms of biological role, thylakoid-determinant subunit of high molecular weight LFNRs-containing protein complexes. The polypeptide is Light-regulated protein 1, chloroplastic (Arabidopsis thaliana (Mouse-ear cress)).